The chain runs to 89 residues: Mitochondrial import inner membrane translocase subunit Tim9 (89 aa).

The residue at position 2 (A2) is an N-acetylalanine. Positions 28–52 (CFLDCVKDFTTREVKPEEVTCSEHC) match the Twin CX3C motif motif. Cystine bridges form between C28/C52 and C32/C48.

The protein belongs to the small Tim family. As to quaternary structure, heterohexamer; composed of 3 copies of TIMM9 and 3 copies of TIMM10/TIM10A, named soluble 70 kDa complex. The complex forms a 6-bladed alpha-propeller structure and associates with the TIMM22 component of the TIM22 complex. Interacts with multi-pass transmembrane proteins in transit. Also forms a complex composed of TIMM9, TIMM10/TIM10A and FXC1/TIM10B.

It is found in the mitochondrion inner membrane. In terms of biological role, mitochondrial intermembrane chaperone that participates in the import and insertion of multi-pass transmembrane proteins into the mitochondrial inner membrane. May also be required for the transfer of beta-barrel precursors from the TOM complex to the sorting and assembly machinery (SAM complex) of the outer membrane. Acts as a chaperone-like protein that protects the hydrophobic precursors from aggregation and guide them through the mitochondrial intermembrane space. This chain is Mitochondrial import inner membrane translocase subunit Tim9 (Timm9), found in Mus musculus (Mouse).